The chain runs to 186 residues: ADP-ribosylation factor-like protein alp41 (186 aa).

Gly2 carries N-myristoyl glycine lipidation. GTP is bound by residues 23–30 (GLDNAGKT), 66–70 (DIGGQ), and 125–128 (NKSD).

This sequence belongs to the small GTPase superfamily. Arf family.

Its subcellular location is the cytoplasm. It localises to the cytoskeleton. Functionally, has a role in the cofactor-dependent pathway of microtubule biogenesis. Required for growth polarity control. This Schizosaccharomyces pombe (strain 972 / ATCC 24843) (Fission yeast) protein is ADP-ribosylation factor-like protein alp41 (alp41).